A 389-amino-acid chain; its full sequence is Succinate--CoA ligase [ADP-forming] subunit beta (389 aa).

One can recognise an ATP-grasp domain in the interval 9–236; that stretch reads KELFAKHEVP…KDATDPLELK (228 aa). ATP-binding positions include K45, 52–54, S94, and E99; that span reads GRG. Residues N191 and D205 each coordinate Mg(2+). Residues N256 and 318–320 each bind substrate; that span reads GIT.

This sequence belongs to the succinate/malate CoA ligase beta subunit family. Heterotetramer of two alpha and two beta subunits. The cofactor is Mg(2+).

The catalysed reaction is succinate + ATP + CoA = succinyl-CoA + ADP + phosphate. It carries out the reaction GTP + succinate + CoA = succinyl-CoA + GDP + phosphate. The protein operates within carbohydrate metabolism; tricarboxylic acid cycle; succinate from succinyl-CoA (ligase route): step 1/1. Functionally, succinyl-CoA synthetase functions in the citric acid cycle (TCA), coupling the hydrolysis of succinyl-CoA to the synthesis of either ATP or GTP and thus represents the only step of substrate-level phosphorylation in the TCA. The beta subunit provides nucleotide specificity of the enzyme and binds the substrate succinate, while the binding sites for coenzyme A and phosphate are found in the alpha subunit. This Rhodococcus opacus (strain B4) protein is Succinate--CoA ligase [ADP-forming] subunit beta.